The following is a 298-amino-acid chain: Bifunctional protein FolD (298 aa).

NADP(+)-binding positions include 165–167 (GRS), Ser-190, and Ile-231.

Belongs to the tetrahydrofolate dehydrogenase/cyclohydrolase family. Homodimer.

It catalyses the reaction (6R)-5,10-methylene-5,6,7,8-tetrahydrofolate + NADP(+) = (6R)-5,10-methenyltetrahydrofolate + NADPH. It carries out the reaction (6R)-5,10-methenyltetrahydrofolate + H2O = (6R)-10-formyltetrahydrofolate + H(+). Its pathway is one-carbon metabolism; tetrahydrofolate interconversion. In terms of biological role, catalyzes the oxidation of 5,10-methylenetetrahydrofolate to 5,10-methenyltetrahydrofolate and then the hydrolysis of 5,10-methenyltetrahydrofolate to 10-formyltetrahydrofolate. The sequence is that of Bifunctional protein FolD from Prochlorococcus marinus subsp. pastoris (strain CCMP1986 / NIES-2087 / MED4).